A 341-amino-acid polypeptide reads, in one-letter code: DER1-like family member protein 1 (341 aa).

Residues Met1–Ala41 are Cytoplasmic-facing. Residues Ile42–Trp62 form a helical membrane-spanning segment. Residues Asn63–Asp122 are Lumenal-facing. Residues Tyr123–Gly143 traverse the membrane as a helical segment. Residues Ser144 to Gln170 are Cytoplasmic-facing. Residues Ile171–Ile191 form a helical membrane-spanning segment. A topological domain (lumenal) is located at residue Ser192. Residues Phe193–Tyr213 traverse the membrane as a helical segment. Residues Thr214–Gln341 are Cytoplasmic-facing. Composition is skewed to polar residues over residues Ser276–Gly286 and Ala296–Gln341. A disordered region spans residues Ser276–Gln341.

The protein belongs to the derlin family.

The protein resides in the endoplasmic reticulum membrane. In terms of biological role, may be involved in the degradation process of some misfolded endoplasmic reticulum (ER) luminal proteins. Its precise role is however unclear and its inability to complement der1 mutations, suggests either that it is not involved in degradation process of misfolded proteins, or that it participates in the destruction of specific misfolded ER luminal proteins. The sequence is that of DER1-like family member protein 1 (DFM1) from Saccharomyces cerevisiae (strain ATCC 204508 / S288c) (Baker's yeast).